The sequence spans 129 residues: Phosphoribosyl-AMP cyclohydrolase (129 aa).

D76 is a Mg(2+) binding site. Position 77 (C77) interacts with Zn(2+). The Mg(2+) site is built by D78 and D80. Residues C97 and C104 each coordinate Zn(2+).

The protein belongs to the PRA-CH family. In terms of assembly, homodimer. Mg(2+) is required as a cofactor. Requires Zn(2+) as cofactor.

It localises to the cytoplasm. It carries out the reaction 1-(5-phospho-beta-D-ribosyl)-5'-AMP + H2O = 1-(5-phospho-beta-D-ribosyl)-5-[(5-phospho-beta-D-ribosylamino)methylideneamino]imidazole-4-carboxamide. The protein operates within amino-acid biosynthesis; L-histidine biosynthesis; L-histidine from 5-phospho-alpha-D-ribose 1-diphosphate: step 3/9. Its function is as follows. Catalyzes the hydrolysis of the adenine ring of phosphoribosyl-AMP. This Leptothrix cholodnii (strain ATCC 51168 / LMG 8142 / SP-6) (Leptothrix discophora (strain SP-6)) protein is Phosphoribosyl-AMP cyclohydrolase.